A 723-amino-acid chain; its full sequence is Protein Aster-A (723 aa).

Low complexity predominate over residues 1–18; it reads MFDTTPHSGRSSPSSSPS. A disordered region spans residues 1-63; sequence MFDTTPHSGR…SGVSGTLSTQ (63 aa). Residues 28 to 38 show a composition bias toward pro residues; sequence PSRPPSAPEPE. Positions 93–160 constitute a GRAM domain; that stretch reads EDFRKLFSKL…KEVTCLKKEK (68 aa). The tract at residues 257–337 is disordered; the sequence is SPSGAADRSQ…DGPTSNLGPL (81 aa). S265, S269, and S273 each carry phosphoserine. Residues 302–314 are compositionally biased toward polar residues; that stretch reads DSQLDASSSQTVT. One can recognise a VASt domain in the interval 370–541; sequence SGRLLINSVF…ELAKAEKVSL (172 aa). At S418 the chain carries Phosphoserine. Residues 562-601 are disordered; the sequence is LSWRGHRDGPQHPDPDPCTQTSMHTSGSLSSRFSEPSVDQ. A compositionally biased stretch (basic and acidic residues) spans 566-576; it reads GHRDGPQHPDP. Over residues 579–595 the composition is skewed to polar residues; the sequence is CTQTSMHTSGSLSSRFS. Residues 610–630 traverse the membrane as a helical segment; sequence ALVLISIVLIVLIALNALLFY.

It localises to the endoplasmic reticulum membrane. Its subcellular location is the cell membrane. It is found in the cytoplasmic vesicle. The protein resides in the autophagosome. Its function is as follows. Cholesterol transporter that mediates non-vesicular transport of cholesterol from the plasma membrane (PM) to the endoplasmic reticulum (ER). Contains unique domains for binding cholesterol and the PM, thereby serving as a molecular bridge for the transfer of cholesterol from the PM to the ER. Plays a crucial role in cholesterol homeostasis and has the unique ability to localize to the PM based on the level of membrane cholesterol. In lipid-poor conditions localizes to the ER membrane and in response to excess cholesterol in the PM is recruited to the endoplasmic reticulum-plasma membrane contact sites (EPCS) which is mediated by the GRAM domain. At the EPCS, the sterol-binding VASt/ASTER domain binds to the cholesterol in the PM and facilitates its transfer from the PM to ER. May play a role in tumor progression. Plays a role in autophagy regulation and is required for biogenesis of the autophagosome. This function in autophagy requires its cholesterol-transfer activity. In Rattus norvegicus (Rat), this protein is Protein Aster-A.